The sequence spans 650 residues: Putative F-box protein R757 (650 aa).

Residues 7-53 (FSVMESLPTELAYHVLSFIDFNSVVTYRLCSQESNNFIKSMLVFFPI) form the F-box domain.

In Acanthamoeba polyphaga mimivirus (APMV), this protein is Putative F-box protein R757.